The primary structure comprises 402 residues: Hyaluronan and proteoglycan link protein 4 (402 aa).

Residues methionine 1 to alanine 29 form the signal peptide. One can recognise an Ig-like C2-type domain in the interval serine 46–glutamate 161. Intrachain disulfides connect cysteine 68–cysteine 143, cysteine 185–cysteine 266, cysteine 209–cysteine 230, cysteine 293–cysteine 363, and cysteine 318–cysteine 339. Asparagine 132 is a glycosylation site (N-linked (GlcNAc...) asparagine). Link domains are found at residues valine 163 to threonine 268 and glycine 273 to arginine 365.

This sequence belongs to the HAPLN family. Expressed predominantly in brain.

It localises to the secreted. The protein localises to the extracellular space. It is found in the extracellular matrix. Functionally, essential for the proper localization of brevican (BCAN), mainly as a perineuronal nets (PNNs)-type deposition in the brainstem and cerebellum thereby playing a key role in the formation and structural organization of PNNs. Contributes to the formation and transmission of inhibitory GABAergic synapses between Purkinje cells and deep cerebellar nuclei neurons. In Homo sapiens (Human), this protein is Hyaluronan and proteoglycan link protein 4 (HAPLN4).